The primary structure comprises 512 residues: Maturase K (512 aa).

The protein belongs to the intron maturase 2 family. MatK subfamily.

Its subcellular location is the plastid. The protein resides in the chloroplast. In terms of biological role, usually encoded in the trnK tRNA gene intron. Probably assists in splicing its own and other chloroplast group II introns. The protein is Maturase K of Platanus occidentalis (Sycamore).